Here is a 644-residue protein sequence, read N- to C-terminus: uncharacterized protein (644 aa).

Residues 16-38 traverse the membrane as a helical segment; it reads LLSYLGVVGVGIAGLCIYRSVWG. A compositionally biased stretch (basic and acidic residues) spans 586–603; the sequence is VRQLQKEAGEGEAEEHPR. The tract at residues 586–613 is disordered; sequence VRQLQKEAGEGEAEEHPRARPAAGKAQR.

It is found in the membrane. This is an uncharacterized protein from Treponema pallidum (strain Nichols).